We begin with the raw amino-acid sequence, 636 residues long: Signal recognition particle receptor subunit alpha (636 aa).

3 disordered regions span residues 132–205, 217–246, and 280–314; these read APTT…ELSK, IQKHGKGLDKSSKSTKSDTPKEKGKKAPRV, and IRGTGPGGQLQDLDCSSSDDEGATQNTKPSATKGT. Composition is skewed to basic and acidic residues over residues 137 to 146 and 153 to 165; these read KKFEDSEKAK and IETRGEKTKEKAK. Residue Ser177 is modified to Phosphoserine. Residues 217–238 are compositionally biased toward basic and acidic residues; the sequence is IQKHGKGLDKSSKSTKSDTPKE. Residue Thr283 is modified to Phosphothreonine. A phosphoserine mark is found at Ser295, Ser296, and Ser297. Over residues 302-312 the composition is skewed to polar residues; that stretch reads ATQNTKPSATK. Residue Thr303 is modified to Phosphothreonine. Residues 417 to 634 are NG domain; that stretch reads YVVTFCGVNG…NAKAVVAALM (218 aa). GTP-binding positions include 423 to 430 and 518 to 522; these read GVNGVGKS and DTAGR. At Thr576 the chain carries Phosphothreonine. 586–589 contributes to the GTP binding site; it reads TKFD.

Belongs to the GTP-binding SRP family. Heterodimer with SRPRB. Interacts with the signal recognition particle (SRP) complex subunit SRP54.

Its subcellular location is the endoplasmic reticulum membrane. Its function is as follows. Component of the SRP (signal recognition particle) receptor. Ensures, in conjunction with the signal recognition particle, the correct targeting of the nascent secretory proteins to the endoplasmic reticulum membrane system. Forms a guanosine 5'-triphosphate (GTP)-dependent complex with the SRP subunit SRP54. SRP receptor compaction and GTPase rearrangement drive SRP-mediated cotranslational protein translocation into the ER. The polypeptide is Signal recognition particle receptor subunit alpha (Mus musculus (Mouse)).